Consider the following 163-residue polypeptide: Nucleotide-binding protein APJL_1242 (163 aa).

This sequence belongs to the YajQ family.

Nucleotide-binding protein. In Actinobacillus pleuropneumoniae serotype 3 (strain JL03), this protein is Nucleotide-binding protein APJL_1242.